A 320-amino-acid chain; its full sequence is MRSAQVYRWQIPMDAGVVLRDRRLKTRDGLYVCLRDGEREGWGEISPLPGFSQETWEEAQTALLTWVNDWLQGSEGLPEMPSVAFGASCALAELTGVLPEAADYRAAPLCTGDPDDLVLRLADMPGEKIAKVKVGLYEAVRDGMVVNLLLEAIPDLHLRLDANRAWTPLKAQQFAKYVNPDYRARIAFLEEPCKTRDDSRAFARETGIAIAWDESLREADFTFEAEEGVRAVVIKPTLTGSLDKVREQVAAAHALGLTAVISSSIESSLGLTQLARIAAWLTPGTLPGLDTLHLMQAQQIRPWPGSALPCLKREELERLL.

The active-site Proton donor is the lysine 133. Positions 161, 190, and 213 each coordinate Mg(2+). Residue lysine 235 is the Proton acceptor of the active site.

Belongs to the mandelate racemase/muconate lactonizing enzyme family. MenC type 1 subfamily. Requires a divalent metal cation as cofactor.

It carries out the reaction (1R,6R)-6-hydroxy-2-succinyl-cyclohexa-2,4-diene-1-carboxylate = 2-succinylbenzoate + H2O. The protein operates within quinol/quinone metabolism; 1,4-dihydroxy-2-naphthoate biosynthesis; 1,4-dihydroxy-2-naphthoate from chorismate: step 4/7. It functions in the pathway quinol/quinone metabolism; menaquinone biosynthesis. Functionally, converts 2-succinyl-6-hydroxy-2,4-cyclohexadiene-1-carboxylate (SHCHC) to 2-succinylbenzoate (OSB). This is o-succinylbenzoate synthase from Salmonella choleraesuis (strain SC-B67).